Reading from the N-terminus, the 301-residue chain is Sulfate adenylyltransferase subunit 2 (301 aa).

Residues 279-301 (RQGRLIDRDEAGSMEKKKREGYF) are disordered.

It belongs to the PAPS reductase family. CysD subfamily. Heterodimer composed of CysD, the smaller subunit, and CysN.

The catalysed reaction is sulfate + ATP + H(+) = adenosine 5'-phosphosulfate + diphosphate. It functions in the pathway sulfur metabolism; hydrogen sulfide biosynthesis; sulfite from sulfate: step 1/3. Its function is as follows. With CysN forms the ATP sulfurylase (ATPS) that catalyzes the adenylation of sulfate producing adenosine 5'-phosphosulfate (APS) and diphosphate, the first enzymatic step in sulfur assimilation pathway. APS synthesis involves the formation of a high-energy phosphoric-sulfuric acid anhydride bond driven by GTP hydrolysis by CysN coupled to ATP hydrolysis by CysD. This chain is Sulfate adenylyltransferase subunit 2, found in Mesorhizobium japonicum (strain LMG 29417 / CECT 9101 / MAFF 303099) (Mesorhizobium loti (strain MAFF 303099)).